Consider the following 1003-residue polypeptide: MKLFLLLLFLLHISHTFTASRPISEFRALLSLKTSLTGAGDDKNSPLSSWKVSTSFCTWIGVTCDVSRRHVTSLDLSGLNLSGTLSPDVSHLRLLQNLSLAENLISGPIPPEISSLSGLRHLNLSNNVFNGSFPDEISSGLVNLRVLDVYNNNLTGDLPVSVTNLTQLRHLHLGGNYFAGKIPPSYGSWPVIEYLAVSGNELVGKIPPEIGNLTTLRELYIGYYNAFEDGLPPEIGNLSELVRFDGANCGLTGEIPPEIGKLQKLDTLFLQVNVFSGPLTWELGTLSSLKSMDLSNNMFTGEIPASFAELKNLTLLNLFRNKLHGEIPEFIGDLPELEVLQLWENNFTGSIPQKLGENGKLNLVDLSSNKLTGTLPPNMCSGNKLETLITLGNFLFGSIPDSLGKCESLTRIRMGENFLNGSIPKGLFGLPKLTQVELQDNYLSGELPVAGGVSVNLGQISLSNNQLSGPLPPAIGNFTGVQKLLLDGNKFQGPIPSEVGKLQQLSKIDFSHNLFSGRIAPEISRCKLLTFVDLSRNELSGEIPNEITAMKILNYLNLSRNHLVGSIPGSISSMQSLTSLDFSYNNLSGLVPGTGQFSYFNYTSFLGNPDLCGPYLGPCKDGVAKGGHQSHSKGPLSASMKLLLVLGLLVCSIAFAVVAIIKARSLKKASESRAWRLTAFQRLDFTCDDVLDSLKEDNIIGKGGAGIVYKGVMPNGDLVAVKRLAAMSRGSSHDHGFNAEIQTLGRIRHRHIVRLLGFCSNHETNLLVYEYMPNGSLGEVLHGKKGGHLHWDTRYKIALEAAKGLCYLHHDCSPLIVHRDVKSNNILLDSNFEAHVADFGLAKFLQDSGTSECMSAIAGSYGYIAPEYAYTLKVDEKSDVYSFGVVLLELVTGRKPVGEFGDGVDIVQWVRKMTDSNKDSVLKVLDPRLSSIPIHEVTHVFYVAMLCVEEQAVERPTMREVVQILTEIPKLPPSKDQPMTESAPESELSPKSGVQSPPDLLNL.

The signal sequence occupies residues 1–19 (MKLFLLLLFLLHISHTFTA). Over 20-640 (SRPISEFRAL…HSKGPLSASM (621 aa)) the chain is Extracellular. LRR repeat units lie at residues 68–92 (RRHV…VSHL), 93–116 (RLLQ…ISSL), 117–140 (SGLR…ISSG), 142–165 (VNLR…VTNL), 166–191 (TQLR…SWPV), 193–213 (EYLA…IGNL), 215–238 (TLRE…IGNL), 239–262 (SELV…IGKL), 263–285 (QKLD…ELGT), 286–310 (LSSL…FAEL), 312–334 (NLTL…IGDL), 335–358 (PELE…LGEN), 359–382 (GKLN…MCSG), 385–406 (LETL…LGKC), 407–430 (ESLT…LFGL), 432–454 (KLTQ…GGVS), 455–480 (VNLG…NFTG), 482–502 (QKLL…VGKL), 503–526 (QQLS…ISRC), 527–550 (KLLT…ITAM), 551–574 (KILN…ISSM), and 575–598 (QSLT…GQFS). N-linked (GlcNAc...) asparagine glycosylation is found at N80, N97, N123, N130, N153, and N164. Residues N212 and N237 are each glycosylated (N-linked (GlcNAc...) asparagine). Residues N312 and N346 are each glycosylated (N-linked (GlcNAc...) asparagine). N420 carries an N-linked (GlcNAc...) asparagine glycan. N-linked (GlcNAc...) asparagine glycosylation occurs at N477. N-linked (GlcNAc...) asparagine glycosylation is found at N557, N586, and N601. Residues 641–661 (KLLLVLGLLVCSIAFAVVAII) traverse the membrane as a helical segment. Over 662-1003 (KARSLKKASE…VQSPPDLLNL (342 aa)) the chain is Cytoplasmic. T686 bears the Phosphothreonine mark. Residues 694 to 971 (LKEDNIIGKG…VQILTEIPKL (278 aa)) enclose the Protein kinase domain. ATP-binding positions include 700-708 (IGKGGAGIV) and K722. Residues Y769 and Y807 each carry the phosphotyrosine modification. The active-site Proton acceptor is the D820. Position 855 is a phosphoserine (S855). 2 positions are modified to phosphotyrosine: Y863 and Y870. Position 871 is a phosphothreonine (T871). Residues 969-1003 (PKLPPSKDQPMTESAPESELSPKSGVQSPPDLLNL) form a disordered region. Position 996 is a phosphoserine (S996).

This sequence belongs to the protein kinase superfamily. Ser/Thr protein kinase family. In terms of assembly, self-interacts and interacts with BAM2 and CLV1. Binds to the CLV3, CLE5, CLE11, CLE18, CLE19, CLE22, CLE25, CLE26, CLE40, CLE41 and CLE42 mature peptides, probably via its extracellular leucine-rich repeat region. In terms of tissue distribution, expressed in seedlings, roots, leaves, inflorescences, flowers and siliques.

It is found in the cell membrane. The catalysed reaction is L-seryl-[protein] + ATP = O-phospho-L-seryl-[protein] + ADP + H(+). It carries out the reaction L-threonyl-[protein] + ATP = O-phospho-L-threonyl-[protein] + ADP + H(+). In terms of biological role, necessary for male gametophyte development, as well as ovule specification and function. Involved in cell-cell communication process required during early anther development, and regulating cell division and differentiation to organize cell layers. Required for the development of high-ordered vascular strands within the leaf and a correlated control of leaf shape, size and symmetry. May regulate the CLV1-dependent CLV3-mediated signaling in meristems maintenance. This is Leucine-rich repeat receptor-like serine/threonine-protein kinase BAM1 (BAM1) from Arabidopsis thaliana (Mouse-ear cress).